Reading from the N-terminus, the 217-residue chain is MRLVLVGPPGAGKGTQAQLIASHLHVPKISTGDIFRKNVADDTPLGRLAKQYMDAGDLVPDEVTIAMVRDRLAGDDVRDGFLLDGFPRTVHQAVELDAMLAEAGARLDVVLELVVDDDEVIRRLSGRRTCADCAHVWHVTYDPPTVDGVCDLCGGKLFQREDDREETVRHRLEVYYQQTAPLIDYYAARGILEGIDAMGPVEEVTARAVAALRHWSR.

Position 10-15 (G10–T15) interacts with ATP. The NMP stretch occupies residues S30 to V59. Residues T31, R36, D57–V59, G85–R88, and Q92 contribute to the AMP site. Residues G126–D163 are LID. R127 is a binding site for ATP. Zn(2+)-binding residues include C130, C133, C150, and C153. Residues R160 and R171 each coordinate AMP. G199 contributes to the ATP binding site.

This sequence belongs to the adenylate kinase family. Monomer.

Its subcellular location is the cytoplasm. The catalysed reaction is AMP + ATP = 2 ADP. Its pathway is purine metabolism; AMP biosynthesis via salvage pathway; AMP from ADP: step 1/1. Its function is as follows. Catalyzes the reversible transfer of the terminal phosphate group between ATP and AMP. Plays an important role in cellular energy homeostasis and in adenine nucleotide metabolism. This is Adenylate kinase from Acidothermus cellulolyticus (strain ATCC 43068 / DSM 8971 / 11B).